A 290-amino-acid polypeptide reads, in one-letter code: Protein EURL homolog (290 aa).

The interval 185–206 (SHSQAQKTEETSSGPEGTIQTQ) is disordered. The stretch at 228–251 (AKLQQRIQEVFEELTHQVQEKDSL) forms a coiled coil.

This sequence belongs to the EURL family. In terms of assembly, interacts with CCDC85B. As to expression, expressed in brain (at protein level). Expressed in neural progenitor cells and postmitotic neurons of the embryonic cerebral cortex.

Plays a role in cortical progenitor cell proliferation and differentiation. Promotes dendritic spine development of post-migratory cortical projection neurons by modulating the beta-catenin signaling pathway. This is Protein EURL homolog from Mus musculus (Mouse).